An 832-amino-acid polypeptide reads, in one-letter code: SID1 transmembrane family member 2 (832 aa).

Residues 1–18 (MIAWRLPLCVLLVASVES) form the signal peptide. Topologically, residues 19 to 293 (HLGALGPKNV…VSQAVTSEAY (275 aa)) are extracellular. N-linked (GlcNAc...) asparagine glycans are attached at residues Asn-27, Asn-54, Asn-60, Asn-123, Asn-141, and Asn-165. A helical transmembrane segment spans residues 294–314 (VGGMLFCLGIFLSFYLLTVLL). Residues 315–447 (ACWENWRQRK…DKRVLRKKYQ (133 aa)) lie on the Cytoplasmic side of the membrane. 3 positions are modified to phosphoserine: Ser-401, Ser-403, and Ser-404. Residues 448 to 468 (IYFWNIATIAVFYALPVVQLV) traverse the membrane as a helical segment. Over 469–499 (ITYQTVVNVTGNQDICYYNFLCAHPLGNLSA) the chain is Extracellular. Asn-476 and Asn-496 each carry an N-linked (GlcNAc...) asparagine glycan. A helical membrane pass occupies residues 500–520 (FNNILSNLGYILLGLLFLLII). Over 521–546 (LQREINHNRALLRNDLYALECGIPKH) the chain is Cytoplasmic. A helical transmembrane segment spans residues 547 to 567 (FGLFYAMGTALMMEGLLSACY). Residues 568–605 (HVCPNYTNFQFDTSFMYMIAGLCMLKLYQKRHPDINAS) are Extracellular-facing. Asn-572 and Asn-603 each carry an N-linked (GlcNAc...) asparagine glycan. Residues 606–626 (AYSAYACLAIVIFFSVLGVVF) traverse the membrane as a helical segment. Residues 627 to 631 (GKGNT) lie on the Cytoplasmic side of the membrane. The chain crosses the membrane as a helical span at residues 632–652 (AFWIVFSVIHIISTLLLSTQL). At 653–688 (YYMGRWKLDSGIFRRILHVLYTDCIRQCSGPLYTDR) the chain is on the extracellular side. The chain crosses the membrane as a helical span at residues 689–709 (MVLLVMGNIINWSLAAYGLIM). Over 710-715 (RPNDFA) the chain is Cytoplasmic. The chain crosses the membrane as a helical span at residues 716–736 (SYLLAIGICNLLLYFAFYIIM). At 737-746 (KLRSGERIKL) the chain is on the extracellular side. The helical transmembrane segment at 747 to 767 (IPLLCIVCTSVVWGFALFFFF) threads the bilayer. Residues 768–796 (QGLSTWQKTPAESREHNRDCILLDFFDDH) are Cytoplasmic-facing. The helical transmembrane segment at 797-817 (DIWHFLSSIAMFGSFLVLLTL) threads the bilayer. Topologically, residues 818–832 (DDDLDTVQRDKIYVF) are extracellular.

This sequence belongs to the SID1 family. As to quaternary structure, interacts with adapter protein complex 1 (AP-1) and AP-2, but not AP-3 and AP-4. Interacts with LAMP2. Post-translationally, glycosylated. As to expression, widely expressed, including in the liver, brain and kidney (at protein level).

Its subcellular location is the lysosome membrane. It localises to the cell membrane. In terms of biological role, mediates the translocation of RNA and DNA across the lysosomal membrane during RNA and DNA autophagy (RDA), a process in which RNA and DNA is directly imported into lysosomes in an ATP-dependent manner, and degraded. Involved in the uptake of single-stranded oligonucleotides by living cells, a process called gymnosis. In vitro, mediates the uptake of linear DNA more efficiently than that of circular DNA, but exhibits similar uptake efficacy toward RNA and DNA. Binds long double-stranded RNA (dsRNA) (500 - 700 base pairs), but not dsRNA shorter than 100 bp. The protein is SID1 transmembrane family member 2 (Sidt2) of Mus musculus (Mouse).